The following is a 221-amino-acid chain: Ras-related protein Rab-27A (221 aa).

Residue S2 is modified to N-acetylserine. S2 carries the post-translational modification Phosphoserine. 16-24 (GDSGVGKTS) lines the GTP pocket. The Effector region signature appears at 38-46 (FITTVGIDF). GTP is bound by residues 74–78 (DTAGQ), 133–136 (NKSD), and 163–165 (SAA). The cysteines at positions 123 and 188 are disulfide-linked. S-geranylgeranyl cysteine attachment occurs at residues C219 and C221. At C221 the chain carries Cysteine methyl ester.

Belongs to the small GTPase superfamily. Rab family. Binds SYTL1, SLAC2B, MYRIP, SYTL3, SYTL4 and SYTL5. Interacts with RPH3A and RPH3A. Binds MLPH and SYTL2. Interacts with UNC13D. Does not interact with the BLOC-3 complex (heterodimer of HPS1 and HPS4). Interacts (GDP-bound form preferentially) with DENND10. As to expression, found in all the examined tissues except in brain. Low expression was found in thymus, kidney, muscle and placenta. Detected in melanocytes, and in most tumor cell lines examined. Expressed in cytotoxic T-lymphocytes (CTL) and mast cells.

The protein resides in the membrane. It localises to the melanosome. Its subcellular location is the late endosome. It is found in the lysosome. The enzyme catalyses GTP + H2O = GDP + phosphate + H(+). With respect to regulation, regulated by guanine nucleotide exchange factors (GEFs) which promote the exchange of bound GDP for free GTP, GTPase activating proteins (GAPs) which increase the GTP hydrolysis activity, and GDP dissociation inhibitors which inhibit the dissociation of the nucleotide from the GTPase. Activated by GEFs such as DENND10. Its function is as follows. Small GTPase which cycles between active GTP-bound and inactive GDP-bound states. In its active state, binds to a variety of effector proteins to regulate homeostasis of late endocytic pathway, including endosomal positioning, maturation and secretion. Plays a role in cytotoxic granule exocytosis in lymphocytes. Required for both granule maturation and granule docking and priming at the immunologic synapse. The sequence is that of Ras-related protein Rab-27A (RAB27A) from Homo sapiens (Human).